The sequence spans 334 residues: L-lactate dehydrogenase B chain (334 aa).

Position 2 is an N-acetylalanine (Ala-2). N6-acetyllysine is present on Lys-7. A phosphoserine mark is found at Ser-11 and Ser-44. NAD(+) contacts are provided by residues 30–58 and Arg-100; that span reads GQVGMACAISILGKSLADELALVDVLEDK. The residue at position 58 (Lys-58) is an N6-acetyllysine. Arg-107 contacts substrate. At Lys-119 the chain carries N6-acetyllysine. Asn-139 lines the NAD(+) pocket. Substrate is bound by residues Asn-139 and Arg-170. The active-site Proton acceptor is the His-194. A Phosphotyrosine modification is found at Tyr-240. Thr-249 is a binding site for substrate. N6-acetyllysine is present on Lys-329.

This sequence belongs to the LDH/MDH superfamily. LDH family. In terms of assembly, homotetramer. Interacts with PTEN upstream reading frame protein MP31; the interaction leads to inhibition of mitochondrial lactate dehydrogenase activity, preventing conversion of lactate to pyruvate in mitochondria.

The protein resides in the cytoplasm. It localises to the mitochondrion inner membrane. The enzyme catalyses (S)-lactate + NAD(+) = pyruvate + NADH + H(+). Its pathway is fermentation; pyruvate fermentation to lactate; (S)-lactate from pyruvate: step 1/1. Functionally, interconverts simultaneously and stereospecifically pyruvate and lactate with concomitant interconversion of NADH and NAD(+). This chain is L-lactate dehydrogenase B chain (Ldhb), found in Mus musculus (Mouse).